An 804-amino-acid chain; its full sequence is Leucine--tRNA ligase (804 aa).

A 'HIGH' region motif is present at residues 40-51; sequence PYPSGAGLHVGH. The 'KMSKS' region motif lies at 576-580; sequence KMSKS. Lys579 provides a ligand contact to ATP.

It belongs to the class-I aminoacyl-tRNA synthetase family.

The protein localises to the cytoplasm. The enzyme catalyses tRNA(Leu) + L-leucine + ATP = L-leucyl-tRNA(Leu) + AMP + diphosphate. This is Leucine--tRNA ligase from Staphylococcus aureus (strain bovine RF122 / ET3-1).